We begin with the raw amino-acid sequence, 328 residues long: Probable voltage-gated potassium channel subunit beta (328 aa).

The NADP(+) site is built by Trp-21, Gln-27, and Asp-49. The Proton donor/acceptor role is filled by Tyr-54. Residues Ser-152, Gln-178, Trp-207, Ser-208, Pro-209, Leu-210, Ala-211, Lys-218, Arg-229, Gly-285, Thr-287, Gln-291, Glu-294, and Asn-295 each coordinate NADP(+).

Belongs to the shaker potassium channel beta subunit family. Forms heteromultimeric complexes with potassium channel alpha subunits. As to expression, expressed in roots, leaves and flowers (at protein level).

Functionally, probable accessory potassium channel protein which modulates the activity of the pore-forming alpha subunit. The protein is Probable voltage-gated potassium channel subunit beta (KAB1) of Arabidopsis thaliana (Mouse-ear cress).